The chain runs to 126 residues: Small ribosomal subunit protein uS12 (126 aa).

The interval 1–23 is disordered; that stretch reads MPTISQLVRKGRKTVASKSTAPA. Residue aspartate 89 is modified to 3-methylthioaspartic acid.

It belongs to the universal ribosomal protein uS12 family. As to quaternary structure, part of the 30S ribosomal subunit. Contacts proteins S8 and S17. May interact with IF1 in the 30S initiation complex.

Functionally, with S4 and S5 plays an important role in translational accuracy. Its function is as follows. Interacts with and stabilizes bases of the 16S rRNA that are involved in tRNA selection in the A site and with the mRNA backbone. Located at the interface of the 30S and 50S subunits, it traverses the body of the 30S subunit contacting proteins on the other side and probably holding the rRNA structure together. The combined cluster of proteins S8, S12 and S17 appears to hold together the shoulder and platform of the 30S subunit. This is Small ribosomal subunit protein uS12 from Clostridium perfringens (strain ATCC 13124 / DSM 756 / JCM 1290 / NCIMB 6125 / NCTC 8237 / Type A).